Here is a 391-residue protein sequence, read N- to C-terminus: Probable FAD-dependent oxidoreductase PA4991 (391 aa).

Residues Ala-17, Glu-36, 44–45 (QS), 49–51 (QGI), and 346–347 (LA) each bind FAD.

It belongs to the DAO family. As to quaternary structure, monomer. FAD is required as a cofactor.

Its function is as follows. Probably functions as a FAD-dependent oxidoreductase, whose physiological substrate is unknown. Does not display amino-acid oxidase or glycerol-3-phosphate dehydrogenase activities. Is essential for growth of P.aeruginosa in the sputum of cystic fibrosis patients. This Pseudomonas aeruginosa (strain ATCC 15692 / DSM 22644 / CIP 104116 / JCM 14847 / LMG 12228 / 1C / PRS 101 / PAO1) protein is Probable FAD-dependent oxidoreductase PA4991.